Here is a 153-residue protein sequence, read N- to C-terminus: NAD(P)H-quinone oxidoreductase subunit N (153 aa).

It belongs to the complex I NdhN subunit family. In terms of assembly, NDH-1 can be composed of about 15 different subunits; different subcomplexes with different compositions have been identified which probably have different functions.

The protein resides in the cellular thylakoid membrane. The catalysed reaction is a plastoquinone + NADH + (n+1) H(+)(in) = a plastoquinol + NAD(+) + n H(+)(out). It carries out the reaction a plastoquinone + NADPH + (n+1) H(+)(in) = a plastoquinol + NADP(+) + n H(+)(out). NDH-1 shuttles electrons from an unknown electron donor, via FMN and iron-sulfur (Fe-S) centers, to quinones in the respiratory and/or the photosynthetic chain. The immediate electron acceptor for the enzyme in this species is believed to be plastoquinone. Couples the redox reaction to proton translocation, and thus conserves the redox energy in a proton gradient. Cyanobacterial NDH-1 also plays a role in inorganic carbon-concentration. The polypeptide is NAD(P)H-quinone oxidoreductase subunit N (Synechococcus sp. (strain CC9605)).